A 129-amino-acid polypeptide reads, in one-letter code: Lysozyme C (129 aa).

In terms of domain architecture, C-type lysozyme spans 1–129 (KIYKRCELAA…VSTWIKDCKL (129 aa)). 4 disulfides stabilise this stretch: Cys-6–Cys-127, Cys-30–Cys-115, Cys-64–Cys-80, and Cys-76–Cys-94. Catalysis depends on residues Glu-35 and Asp-52.

Belongs to the glycosyl hydrolase 22 family. In terms of assembly, monomer.

Its subcellular location is the secreted. The catalysed reaction is Hydrolysis of (1-&gt;4)-beta-linkages between N-acetylmuramic acid and N-acetyl-D-glucosamine residues in a peptidoglycan and between N-acetyl-D-glucosamine residues in chitodextrins.. Functionally, lysozymes have primarily a bacteriolytic function; those in tissues and body fluids are associated with the monocyte-macrophage system and enhance the activity of immunoagents. In Ortalis vetula (Plain chachalaca), this protein is Lysozyme C (LYZ).